The primary structure comprises 609 residues: Mitochondrial nucleoid-associated protein 1 (609 aa).

At 1–554 (MSDNPPRMEV…CNTTIRKSGF (554 aa)) the chain is on the extracellular side. 2 disordered regions span residues 133–163 (QEETKAQFYTSEKTSPKRELAEDLPKSGESR) and 406–425 (SPEGQLSLEPKSDSQFQASH). Basic and acidic residues predominate over residues 146–161 (TSPKRELAEDLPKSGE). Residues 555–571 (GGITMLSTGYFVLCCSW) traverse the membrane as a helical segment. The Cytoplasmic segment spans residues 572-609 (SFRRLKKLCRPLPWKSTVPPSVGVAKTTGDCRSKTCLD).

Its subcellular location is the mitochondrion inner membrane. The protein localises to the mitochondrion matrix. The protein resides in the mitochondrion nucleoid. In terms of biological role, critical regulator of mitochondrial DNA (mtDNA) abundance. Binds dsDNA throughout the mitochondrial genome without sequence specificity and controls mtDNA copy number by promoting its replication. Also plays important roles in mitochondrial metabolism and cell proliferation. The sequence is that of Mitochondrial nucleoid-associated protein 1 from Pongo abelii (Sumatran orangutan).